Reading from the N-terminus, the 322-residue chain is Replication factor C small subunit (322 aa).

46–53 (GSAGIGKT) lines the ATP pocket.

It belongs to the activator 1 small subunits family. RfcS subfamily. As to quaternary structure, heteromultimer composed of small subunits (RfcS) and large subunits (RfcL).

In terms of biological role, part of the RFC clamp loader complex which loads the PCNA sliding clamp onto DNA. The sequence is that of Replication factor C small subunit from Methanoculleus marisnigri (strain ATCC 35101 / DSM 1498 / JR1).